Consider the following 528-residue polypeptide: Peptide chain release factor 3 (528 aa).

One can recognise a tr-type G domain in the interval 11 to 279 (SRRRTFAIIS…GLVDWAPSPQ (269 aa)). Residues 20–27 (SHPDAGKT), 88–92 (DTPGH), and 142–145 (NKLD) contribute to the GTP site.

It belongs to the TRAFAC class translation factor GTPase superfamily. Classic translation factor GTPase family. PrfC subfamily.

It is found in the cytoplasm. In terms of biological role, increases the formation of ribosomal termination complexes and stimulates activities of RF-1 and RF-2. It binds guanine nucleotides and has strong preference for UGA stop codons. It may interact directly with the ribosome. The stimulation of RF-1 and RF-2 is significantly reduced by GTP and GDP, but not by GMP. The polypeptide is Peptide chain release factor 3 (Pseudoalteromonas atlantica (strain T6c / ATCC BAA-1087)).